The sequence spans 335 residues: Beta-1,4-mannooligosaccharide phosphorylase (335 aa).

Belongs to the glycosyl hydrolase 130 family. Homohexamer in solution.

It catalyses the reaction [(1-&gt;4)-beta-D-mannosyl](n) + phosphate = [(1-&gt;4)-beta-D-mannosyl](n-1) + alpha-D-mannose 1-phosphate. Functionally, catalyzes the phosphorolysis of beta-1,4-mannooligosaccharides to mannose 1-phosphate (Man1P) and shorter mannooligosaccharides. Can also catalyze the phosphorolysis of 4-O-beta-D-mannopyranosyl-D-glucopyranose (Man-Glc), but shows higher activity toward longer mannooligosaccharides. Involved in a mannan catabolic pathway which feeds into glycolysis. The protein is Beta-1,4-mannooligosaccharide phosphorylase of Ruminococcus albus (strain ATCC 27210 / DSM 20455 / JCM 14654 / NCDO 2250 / 7).